The following is a 471-amino-acid chain: Heat shock 70 kDa protein 13 (471 aa).

An N-terminal signal peptide occupies residues 1–22 (MAGEMTILGSAVLTLLLAGYLA). The segment covering 317–330 (DSKEPQNGDSELPK) has biased composition (basic and acidic residues). The segment at 317–350 (DSKEPQNGDSELPKDQLTPGDGHHVNRVFRPGLS) is disordered.

It belongs to the heat shock protein 70 family. In terms of assembly, binds UBQLN2.

The protein localises to the microsome. It localises to the endoplasmic reticulum. Its function is as follows. Has peptide-independent ATPase activity. This is Heat shock 70 kDa protein 13 (Hspa13) from Mus musculus (Mouse).